The chain runs to 61 residues: MARKALIEKAKRTPKFKVRAYTRCVRCGRARSVYRFFGLCRICLRELAHKGQLPGVRKASW.

Residues Cys24, Cys27, Cys40, and Cys43 each contribute to the Zn(2+) site.

Belongs to the universal ribosomal protein uS14 family. Zinc-binding uS14 subfamily. In terms of assembly, part of the 30S ribosomal subunit. Contacts proteins S3 and S10. The cofactor is Zn(2+).

Binds 16S rRNA, required for the assembly of 30S particles and may also be responsible for determining the conformation of the 16S rRNA at the A site. The protein is Small ribosomal subunit protein uS14 of Thermus thermophilus (strain ATCC BAA-163 / DSM 7039 / HB27).